Here is a 256-residue protein sequence, read N- to C-terminus: POU domain class 2-associating factor 1 (256 aa).

A disordered region spans residues 1 to 23 (MLWQKPTAPEQAPAPARPYQGVR). One can recognise an OCA domain in the interval 16-38 (ARPYQGVRVKEPVKELLRRKRGH).

The protein belongs to the POU2AF family. As to quaternary structure, interacts with POU2F1/OCT1 and POU2F2/OCT2; the interaction increases POU2F1 and POU2F2 transactivation activity. Post-translationally, ubiquitinated; mediated by SIAH1 or SIAH2 and leading to its subsequent proteasomal degradation. In terms of tissue distribution, B-cell specific. Detected in mainly in spleen, but also in thymus, periphral blood leukocyte and small intestine.

Its subcellular location is the nucleus. Transcriptional coactivator that specifically associates with either POU2F1/OCT1 or POU2F2/OCT2. It boosts the POU2F1/OCT1 mediated promoter activity and to a lesser extent, that of POU2F2/OCT2. It recognizes the POU domains of POU2F1/OCT1 and POU2F2/OCT2. It is essential for the response of B-cells to antigens and required for the formation of germinal centers. Regulates IL6 expression in B cells as POU2F2/OCT2 coactivator. The sequence is that of POU domain class 2-associating factor 1 from Homo sapiens (Human).